A 282-amino-acid polypeptide reads, in one-letter code: Protein OS-9 homolog (282 aa).

The N-terminal stretch at 1-23 is a signal peptide; sequence MRITQILLCLVIVALSSSSHVWS. A glycan (N-linked (GlcNAc...) asparagine) is linked at N94. The MRH domain occupies 120 to 239; the sequence is EKCLFRQEGW…TVQCPTLCKH (120 aa). Cysteines 122 and 135 form a disulfide. A mannooligosaccharide derivative-binding residues include W129, W130, and Q142. N-linked (GlcNAc...) asparagine glycans are attached at residues N169 and N190. 2 disulfide bridges follow: C194/C225 and C209/C237. The a mannooligosaccharide derivative site is built by D195, R201, E221, and Y227. A compositionally biased stretch (basic and acidic residues) spans 262-276; the sequence is DATRNKEEQAVDESP. A disordered region spans residues 262–282; sequence DATRNKEEQAVDESPKMIADS.

It belongs to the OS-9 family. In terms of assembly, interacts with HRD3A.

The protein resides in the endoplasmic reticulum. Functionally, lectin which functions in endoplasmic reticulum (ER) quality control and ER-associated degradation (ERAD). May bind terminally misfolded non-glycosylated proteins as well as improperly folded glycoproteins, retain them in the ER, and possibly transfer them to the ubiquitination machinery and promote their degradation. Targets the misfolded LRR receptor kinase BRI1 and the misfolded receptor-like kinase EFR. This Arabidopsis thaliana (Mouse-ear cress) protein is Protein OS-9 homolog.